A 62-amino-acid chain; its full sequence is Photosystem II reaction center protein Z (62 aa).

A run of 2 helical transmembrane segments spans residues alanine 8–alanine 28 and phenylalanine 41–isoleucine 61.

The protein belongs to the PsbZ family. In terms of assembly, PSII is composed of 1 copy each of membrane proteins PsbA, PsbB, PsbC, PsbD, PsbE, PsbF, PsbH, PsbI, PsbJ, PsbK, PsbL, PsbM, PsbT, PsbY, PsbZ, Psb30/Ycf12, at least 3 peripheral proteins of the oxygen-evolving complex and a large number of cofactors. It forms dimeric complexes.

It is found in the plastid. It localises to the chloroplast thylakoid membrane. Its function is as follows. May control the interaction of photosystem II (PSII) cores with the light-harvesting antenna, regulates electron flow through the 2 photosystem reaction centers. PSII is a light-driven water plastoquinone oxidoreductase, using light energy to abstract electrons from H(2)O, generating a proton gradient subsequently used for ATP formation. The protein is Photosystem II reaction center protein Z of Spinacia oleracea (Spinach).